The chain runs to 136 residues: Ciliary microtubule inner protein 1 (136 aa).

It localises to the cell projection. Its subcellular location is the cilium. This is Ciliary microtubule inner protein 1 (Cimip1) from Mus musculus (Mouse).